The primary structure comprises 264 residues: Thymidylate synthase (264 aa).

Residues Arg-21 and 126-127 (RR) each bind dUMP. The active-site Nucleophile is the Cys-146. DUMP is bound by residues 166-169 (RSAD), Asn-177, and 207-209 (HLY). Asp-169 provides a ligand contact to (6R)-5,10-methylene-5,6,7,8-tetrahydrofolate. Ala-263 contributes to the (6R)-5,10-methylene-5,6,7,8-tetrahydrofolate binding site.

It belongs to the thymidylate synthase family. Bacterial-type ThyA subfamily. Homodimer.

It localises to the cytoplasm. The catalysed reaction is dUMP + (6R)-5,10-methylene-5,6,7,8-tetrahydrofolate = 7,8-dihydrofolate + dTMP. Its pathway is pyrimidine metabolism; dTTP biosynthesis. In terms of biological role, catalyzes the reductive methylation of 2'-deoxyuridine-5'-monophosphate (dUMP) to 2'-deoxythymidine-5'-monophosphate (dTMP) while utilizing 5,10-methylenetetrahydrofolate (mTHF) as the methyl donor and reductant in the reaction, yielding dihydrofolate (DHF) as a by-product. This enzymatic reaction provides an intracellular de novo source of dTMP, an essential precursor for DNA biosynthesis. The polypeptide is Thymidylate synthase (Halorhodospira halophila (strain DSM 244 / SL1) (Ectothiorhodospira halophila (strain DSM 244 / SL1))).